A 368-amino-acid chain; its full sequence is 3-dehydroquinate synthase (368 aa).

NAD(+) contacts are provided by residues 71–76, 105–109, 129–130, K142, K151, and 169–172; these read DGEAFK, GVVGD, TT, and TLRT. Residues E184, H247, and H264 each coordinate Zn(2+).

This sequence belongs to the sugar phosphate cyclases superfamily. Dehydroquinate synthase family. Co(2+) serves as cofactor. Zn(2+) is required as a cofactor. It depends on NAD(+) as a cofactor.

The protein resides in the cytoplasm. It carries out the reaction 7-phospho-2-dehydro-3-deoxy-D-arabino-heptonate = 3-dehydroquinate + phosphate. It participates in metabolic intermediate biosynthesis; chorismate biosynthesis; chorismate from D-erythrose 4-phosphate and phosphoenolpyruvate: step 2/7. Functionally, catalyzes the conversion of 3-deoxy-D-arabino-heptulosonate 7-phosphate (DAHP) to dehydroquinate (DHQ). This is 3-dehydroquinate synthase from Cupriavidus taiwanensis (strain DSM 17343 / BCRC 17206 / CCUG 44338 / CIP 107171 / LMG 19424 / R1) (Ralstonia taiwanensis (strain LMG 19424)).